Here is an 899-residue protein sequence, read N- to C-terminus: Protein translocase subunit SecA (899 aa).

ATP is bound by residues Gln-87, Gly-105–Thr-109, and Asp-516. 4 residues coordinate Zn(2+): Cys-884, Cys-886, Cys-895, and His-896.

It belongs to the SecA family. Monomer and homodimer. Part of the essential Sec protein translocation apparatus which comprises SecA, SecYEG and auxiliary proteins SecDF. Other proteins may also be involved. Requires Zn(2+) as cofactor.

Its subcellular location is the cell inner membrane. It is found in the cytoplasm. It catalyses the reaction ATP + H2O + cellular proteinSide 1 = ADP + phosphate + cellular proteinSide 2.. Its function is as follows. Part of the Sec protein translocase complex. Interacts with the SecYEG preprotein conducting channel. Has a central role in coupling the hydrolysis of ATP to the transfer of proteins into and across the cell membrane, serving as an ATP-driven molecular motor driving the stepwise translocation of polypeptide chains across the membrane. This Borreliella burgdorferi (strain ZS7) (Borrelia burgdorferi) protein is Protein translocase subunit SecA.